Here is a 210-residue protein sequence, read N- to C-terminus: UPF0301 protein M446_6268 (210 aa).

The protein belongs to the UPF0301 (AlgH) family.

The chain is UPF0301 protein M446_6268 from Methylobacterium sp. (strain 4-46).